The sequence spans 177 residues: MLDAFSRVVTSADSKAAYVGGADLQALKKFVSEGNKRLDAVNAIVSNASCIVSDAVSGMICENPALISPSGNCYTNRRMAACLRDAEIILRYVSYSLLSGDSSVLEDRCLGGLKETYASLGVPAAGNARAVGIMKATCVGFINNTSNQKKLSTPAGDCSALASECAGYFDKVTSALA.

Y18 contributes to the mesobiliverdin binding site. The (2R,3E)-phycocyanobilin site is built by K28, N35, and D39. C50, D54, and C61 together coordinate 15,16-dihydrobiliverdin. The (2R,3E)-phycocyanobilin site is built by N72, R77, C82, R84, and D85. Q148 provides a ligand contact to 15,16-dihydrobiliverdin. (2R,3E)-phycocyanobilin-binding residues include P154, G156, and C158.

It belongs to the phycobiliprotein family. In terms of assembly, heterotetramer of 2 different alpha chains and 2 identical beta chains which form 2 alpha-beta heterodimers within the heterotetramer. Post-translationally, contains two phycocyanobilin chromophores, one mesobiliverdin chromophore and one 15,16-dihydrobiliverdin chromophore with binding mediated by both the alpha and beta subunits.

The protein localises to the plastid. It localises to the chloroplast thylakoid membrane. Its function is as follows. Light-harvesting photosynthetic tetrapyrrole chromophore-protein from the phycobiliprotein complex. This Chroomonas sp. (strain CCMP270) protein is Phycocyanin PC645 beta subunit.